Here is a 381-residue protein sequence, read N- to C-terminus: Queuine tRNA-ribosyltransferase (381 aa).

Residue Asp-96 is the Proton acceptor of the active site. Residues 96 to 100 (DSGGF), Asp-150, Gln-193, and Gly-220 contribute to the substrate site. The segment at 251-257 (GVGSPDA) is RNA binding. Asp-270 (nucleophile) is an active-site residue. The segment at 275-279 (TRIAR) is RNA binding; important for wobble base 34 recognition. Zn(2+)-binding residues include Cys-308, Cys-310, Cys-313, and His-339.

It belongs to the queuine tRNA-ribosyltransferase family. In terms of assembly, homodimer. Within each dimer, one monomer is responsible for RNA recognition and catalysis, while the other monomer binds to the replacement base PreQ1. It depends on Zn(2+) as a cofactor.

It catalyses the reaction 7-aminomethyl-7-carbaguanine + guanosine(34) in tRNA = 7-aminomethyl-7-carbaguanosine(34) in tRNA + guanine. Its pathway is tRNA modification; tRNA-queuosine biosynthesis. Functionally, catalyzes the base-exchange of a guanine (G) residue with the queuine precursor 7-aminomethyl-7-deazaguanine (PreQ1) at position 34 (anticodon wobble position) in tRNAs with GU(N) anticodons (tRNA-Asp, -Asn, -His and -Tyr). Catalysis occurs through a double-displacement mechanism. The nucleophile active site attacks the C1' of nucleotide 34 to detach the guanine base from the RNA, forming a covalent enzyme-RNA intermediate. The proton acceptor active site deprotonates the incoming PreQ1, allowing a nucleophilic attack on the C1' of the ribose to form the product. After dissociation, two additional enzymatic reactions on the tRNA convert PreQ1 to queuine (Q), resulting in the hypermodified nucleoside queuosine (7-(((4,5-cis-dihydroxy-2-cyclopenten-1-yl)amino)methyl)-7-deazaguanosine). The chain is Queuine tRNA-ribosyltransferase from Bacillus subtilis (strain 168).